We begin with the raw amino-acid sequence, 251 residues long: tRNA (guanine-N(1)-)-methyltransferase (251 aa).

Residues G117 and 137-142 (IGDYVL) each bind S-adenosyl-L-methionine.

This sequence belongs to the RNA methyltransferase TrmD family. As to quaternary structure, homodimer.

The protein localises to the cytoplasm. The catalysed reaction is guanosine(37) in tRNA + S-adenosyl-L-methionine = N(1)-methylguanosine(37) in tRNA + S-adenosyl-L-homocysteine + H(+). In terms of biological role, specifically methylates guanosine-37 in various tRNAs. The chain is tRNA (guanine-N(1)-)-methyltransferase from Haemophilus ducreyi (strain 35000HP / ATCC 700724).